Consider the following 340-residue polypeptide: Glycerol-3-phosphate dehydrogenase [NAD(P)+] (340 aa).

3 residues coordinate NADPH: Trp11, Arg33, and Lys110. Lys110, Gly144, and Ser146 together coordinate sn-glycerol 3-phosphate. An NADPH-binding site is contributed by Ala148. Sn-glycerol 3-phosphate contacts are provided by Lys199, Asp252, Ser262, Arg263, and Asn264. Lys199 acts as the Proton acceptor in catalysis. Arg263 is a binding site for NADPH. Residues Val287 and Glu289 each contribute to the NADPH site.

It belongs to the NAD-dependent glycerol-3-phosphate dehydrogenase family.

The protein localises to the cytoplasm. The catalysed reaction is sn-glycerol 3-phosphate + NAD(+) = dihydroxyacetone phosphate + NADH + H(+). The enzyme catalyses sn-glycerol 3-phosphate + NADP(+) = dihydroxyacetone phosphate + NADPH + H(+). Its pathway is membrane lipid metabolism; glycerophospholipid metabolism. Catalyzes the reduction of the glycolytic intermediate dihydroxyacetone phosphate (DHAP) to sn-glycerol 3-phosphate (G3P), the key precursor for phospholipid synthesis. The polypeptide is Glycerol-3-phosphate dehydrogenase [NAD(P)+] (Polynucleobacter necessarius subsp. necessarius (strain STIR1)).